A 140-amino-acid polypeptide reads, in one-letter code: MRHRVGGRKLQRTASHRTALFRNQSAALIKHEQILTTLAKAKELRPYVEKLITLAKKGGLANRRLAHARLQDDTQLKKLFEVLAERYASRNGGYTRIVKAGIRASDAASMAIIEFVDRDVSAKGQDSGPVETDEDVAEAA.

This sequence belongs to the bacterial ribosomal protein bL17 family. Part of the 50S ribosomal subunit. Contacts protein L32.

This Rhizorhabdus wittichii (strain DSM 6014 / CCUG 31198 / JCM 15750 / NBRC 105917 / EY 4224 / RW1) (Sphingomonas wittichii) protein is Large ribosomal subunit protein bL17.